Reading from the N-terminus, the 446-residue chain is Putative zinc metalloprotease NMA0084 (446 aa).

Position 18 (His-18) interacts with Zn(2+). Glu-19 is a catalytic residue. Residue His-22 participates in Zn(2+) binding. 3 consecutive transmembrane segments (helical) span residues 93–115 (IAIV…GLSF), 376–398 (FLAL…LDGG), and 419–438 (NIGL…VAFF). The 82-residue stretch at 100 to 181 (PLTNLALAVL…KVAVGVQTAS (82 aa)) folds into the PDZ domain.

It belongs to the peptidase M50B family. Zn(2+) serves as cofactor.

It localises to the cell inner membrane. This Neisseria meningitidis serogroup A / serotype 4A (strain DSM 15465 / Z2491) protein is Putative zinc metalloprotease NMA0084.